Here is a 265-residue protein sequence, read N- to C-terminus: Probable cyclic nucleotide phosphodiesterase SynWH7803_1390 (265 aa).

Residues Asp9, His11, Asp49, Asn86, His157, His196, and His198 each contribute to the Fe cation site. AMP contacts are provided by residues His11, Asp49, and 86–87 (NH). Residue His198 participates in AMP binding.

This sequence belongs to the cyclic nucleotide phosphodiesterase class-III family. It depends on Fe(2+) as a cofactor.

The sequence is that of Probable cyclic nucleotide phosphodiesterase SynWH7803_1390 from Synechococcus sp. (strain WH7803).